Reading from the N-terminus, the 149-residue chain is Urease accessory protein UreE (149 aa).

The protein belongs to the UreE family.

It localises to the cytoplasm. In terms of biological role, involved in urease metallocenter assembly. Binds nickel. Probably functions as a nickel donor during metallocenter assembly. This Prochlorococcus marinus (strain MIT 9301) protein is Urease accessory protein UreE.